The primary structure comprises 342 residues: Glucokinase (342 aa).

ATP is bound at residue 7-12 (GDIGGT).

Belongs to the bacterial glucokinase family.

The protein resides in the cytoplasm. It catalyses the reaction D-glucose + ATP = D-glucose 6-phosphate + ADP + H(+). The chain is Glucokinase from Trichormus variabilis (strain ATCC 29413 / PCC 7937) (Anabaena variabilis).